Consider the following 397-residue polypeptide: Presenilin-like protein At2g29900 (397 aa).

The Cytoplasmic segment spans residues M1–E17. Residues L18 to I38 traverse the membrane as a helical segment. The Lumenal segment spans residues L39 to N76. Residues S77–L97 traverse the membrane as a helical segment. The Cytoplasmic segment spans residues R98 to Y106. Residues M107–I127 traverse the membrane as a helical segment. Residues D128–D135 are Lumenal-facing. A helical membrane pass occupies residues S136–M156. Over S157–K158 the chain is Cytoplasmic. The helical transmembrane segment at F159–F179 threads the bilayer. Residues T180–W188 lie on the Lumenal side of the membrane. A helical transmembrane segment spans residues V189–L209. The active site involves D198. The Cytoplasmic segment spans residues R210–G305. The helical transmembrane segment at L306–V326 threads the bilayer. Residue D318 is part of the active site. Topologically, residues G327–T336 are lumenal. The helical transmembrane segment at V337–V357 threads the bilayer. Residues Y358 to P366 are Cytoplasmic-facing. Positions P363–L365 match the PAL motif. The segment at residues V367–V387 is an intramembrane region (helical). Residues V388–F397 are Cytoplasmic-facing.

Belongs to the peptidase A22A family. As to quaternary structure, homodimer. Probable component of the gamma-secretase complex, a complex composed of a presenilin homodimer, nicastrin, APH1 and PEN2.

The protein resides in the endoplasmic reticulum membrane. Its subcellular location is the golgi apparatus membrane. Probable subunit of the gamma-secretase complex, an endoprotease complex that catalyzes the intramembrane cleavage of integral membrane proteins such as Notch receptors. This chain is Presenilin-like protein At2g29900, found in Arabidopsis thaliana (Mouse-ear cress).